The chain runs to 428 residues: MTLMEDAKKGVITPEIEAVAKAEGIDAEIVRSCVAKGLVAIPKNARRDTLPVGIGKYMSTKINANVGTSRDCIDIDAEIEKAKAAEAFGAHAVMDLSTGGDLDEIRTRILKAVNIPVGTVPIYQAAASRKIVVEMSSDDMFNAVRKHAEQGVDFVTVHAGVNLNSLERLRQSDRIMNVVSRGGSFTLAWMLHNGEDNPFYAEFDYLLEIAKEYDMTLSLGDGMRPGCIADASDRPKFMEFITLGELVKRSREANVQTFVEGPGHVPLNEIELSVRGMKELCDGAPLYLLGPLVTDIAPGFDHITGAIGGAVAGMHGTDFLCMVTPSEHLALPSIEDIKEGLLVTKLAAHTIDLIKEGPRERAWKQDTAMAYARRDLDWEKQFELAIDGDRARKIRDARKTESDACSMCGELCAVKIVKEAFGEKKEEE.

Substrate is bound by residues Asn65, Met94, Tyr123, His158, 180-182, 221-224, and Glu260; these read SRG and DGMR. His264 contacts Zn(2+). Position 287 (Tyr287) interacts with substrate. Residue His328 participates in Zn(2+) binding. Residues Cys405, Cys408, and Cys412 each contribute to the [4Fe-4S] cluster site.

Belongs to the ThiC family. [4Fe-4S] cluster is required as a cofactor.

The enzyme catalyses 5-amino-1-(5-phospho-beta-D-ribosyl)imidazole + S-adenosyl-L-methionine = 4-amino-2-methyl-5-(phosphooxymethyl)pyrimidine + CO + 5'-deoxyadenosine + formate + L-methionine + 3 H(+). The protein operates within cofactor biosynthesis; thiamine diphosphate biosynthesis. Its function is as follows. Catalyzes the synthesis of the hydroxymethylpyrimidine phosphate (HMP-P) moiety of thiamine from aminoimidazole ribotide (AIR) in a radical S-adenosyl-L-methionine (SAM)-dependent reaction. The chain is Phosphomethylpyrimidine synthase 1 from Methanosarcina mazei (strain ATCC BAA-159 / DSM 3647 / Goe1 / Go1 / JCM 11833 / OCM 88) (Methanosarcina frisia).